The chain runs to 328 residues: Ketol-acid reductoisomerase (NADP(+)) (328 aa).

The region spanning 1 to 179 (MRVLYERDGD…GGGAAGIIET (179 aa)) is the KARI N-terminal Rossmann domain. NADP(+)-binding positions include 24–27 (YGSQ), arginine 47, and serine 51. Histidine 106 is an active-site residue. NADP(+) is bound at residue glycine 132. Positions 180–325 (TFVDETETDL…ARLRSRMTCA (146 aa)) constitute a KARI C-terminal knotted domain. Mg(2+) is bound by residues aspartate 188, glutamate 192, glutamate 224, and glutamate 228. Substrate is bound at residue serine 249.

The protein belongs to the ketol-acid reductoisomerase family. It depends on Mg(2+) as a cofactor.

It catalyses the reaction (2R)-2,3-dihydroxy-3-methylbutanoate + NADP(+) = (2S)-2-acetolactate + NADPH + H(+). It carries out the reaction (2R,3R)-2,3-dihydroxy-3-methylpentanoate + NADP(+) = (S)-2-ethyl-2-hydroxy-3-oxobutanoate + NADPH + H(+). It participates in amino-acid biosynthesis; L-isoleucine biosynthesis; L-isoleucine from 2-oxobutanoate: step 2/4. Its pathway is amino-acid biosynthesis; L-valine biosynthesis; L-valine from pyruvate: step 2/4. Involved in the biosynthesis of branched-chain amino acids (BCAA). Catalyzes an alkyl-migration followed by a ketol-acid reduction of (S)-2-acetolactate (S2AL) to yield (R)-2,3-dihydroxy-isovalerate. In the isomerase reaction, S2AL is rearranged via a Mg-dependent methyl migration to produce 3-hydroxy-3-methyl-2-ketobutyrate (HMKB). In the reductase reaction, this 2-ketoacid undergoes a metal-dependent reduction by NADPH to yield (R)-2,3-dihydroxy-isovalerate. The polypeptide is Ketol-acid reductoisomerase (NADP(+)) (Tremblaya princeps).